A 59-amino-acid polypeptide reads, in one-letter code: Large ribosomal subunit protein uL30 (59 aa).

This sequence belongs to the universal ribosomal protein uL30 family. As to quaternary structure, part of the 50S ribosomal subunit.

In Staphylococcus aureus (strain JH1), this protein is Large ribosomal subunit protein uL30.